The chain runs to 84 residues: Small ribosomal subunit protein uS17 (84 aa).

This sequence belongs to the universal ribosomal protein uS17 family. As to quaternary structure, part of the 30S ribosomal subunit.

One of the primary rRNA binding proteins, it binds specifically to the 5'-end of 16S ribosomal RNA. This is Small ribosomal subunit protein uS17 from Salmonella typhi.